The primary structure comprises 104 residues: Large ribosomal subunit protein bL21 (104 aa).

The protein belongs to the bacterial ribosomal protein bL21 family. As to quaternary structure, part of the 50S ribosomal subunit. Contacts protein L20.

Functionally, this protein binds to 23S rRNA in the presence of protein L20. In Lactococcus lactis subsp. lactis (strain IL1403) (Streptococcus lactis), this protein is Large ribosomal subunit protein bL21.